We begin with the raw amino-acid sequence, 205 residues long: MTEFESAPAYQEAKYLTSAAEFDQLPPDQGAEIAFIGRSNAGKSSALNIITGIKGLARTSKTPGRTQMINFFALNEHERLVDLPGYGYAKVPRMVQKRWEELVDSYLKKRRCLKGLVVVMDIRHPLKEVDEDVIEWAVNYDIPIHILLTKSDKLSQNAAKKTLGEVQTAISAYGEKLTLQLFSSHDRTGLDEVKAVLSQWFSSEP.

One can recognise an EngB-type G domain in the interval 29 to 203 (QGAEIAFIGR…KAVLSQWFSS (175 aa)). GTP contacts are provided by residues 37–44 (GRSNAGKS), 64–68 (GRTQM), 82–85 (DLPG), 149–152 (TKSD), and 182–184 (FSS). 2 residues coordinate Mg(2+): Ser-44 and Thr-66.

It belongs to the TRAFAC class TrmE-Era-EngA-EngB-Septin-like GTPase superfamily. EngB GTPase family. The cofactor is Mg(2+).

Functionally, necessary for normal cell division and for the maintenance of normal septation. This chain is Probable GTP-binding protein EngB, found in Coxiella burnetii (strain CbuK_Q154) (Coxiella burnetii (strain Q154)).